The primary structure comprises 297 residues: Glycine--tRNA ligase alpha subunit (297 aa).

Belongs to the class-II aminoacyl-tRNA synthetase family. As to quaternary structure, tetramer of two alpha and two beta subunits.

The protein localises to the cytoplasm. It catalyses the reaction tRNA(Gly) + glycine + ATP = glycyl-tRNA(Gly) + AMP + diphosphate. The polypeptide is Glycine--tRNA ligase alpha subunit (glyQ) (Halalkalibacterium halodurans (strain ATCC BAA-125 / DSM 18197 / FERM 7344 / JCM 9153 / C-125) (Bacillus halodurans)).